Here is a 37-residue protein sequence, read N- to C-terminus: Cytochrome b6-f complex subunit 5 (37 aa).

The helical transmembrane segment at 5–25 (FLLGIILGLIPITLIGLFVTA) threads the bilayer.

It belongs to the PetG family. As to quaternary structure, the 4 large subunits of the cytochrome b6-f complex are cytochrome b6, subunit IV (17 kDa polypeptide, PetD), cytochrome f and the Rieske protein, while the 4 small subunits are PetG, PetL, PetM and PetN. The complex functions as a dimer.

It localises to the plastid membrane. In terms of biological role, component of the cytochrome b6-f complex, which mediates electron transfer between photosystem II (PSII) and photosystem I (PSI), cyclic electron flow around PSI, and state transitions. PetG is required for either the stability or assembly of the cytochrome b6-f complex. In Cuscuta obtusiflora (Peruvian dodder), this protein is Cytochrome b6-f complex subunit 5.